Reading from the N-terminus, the 772-residue chain is Tubulin monoglycylase TTLL3 (772 aa).

The segment at 50 to 81 is disordered; it reads PTLLPPQKDLDSSAMGDSDTTEDEDEDEDEEF. The span at 68–81 shows a compositional bias: acidic residues; sequence DTTEDEDEDEDEEF. Positions 151 to 510 constitute a TTL domain; it reads ARNVLKLVVK…RMLDRNCDTG (360 aa). Residues lysine 283, 289 to 290, 321 to 324, 334 to 336, and 378 to 379 contribute to the ATP site; these read RG, QKYI, KFD, and CN. A protein is bound at residue arginine 289. An L-glutamate-binding site is contributed by serine 381. Residues aspartate 456, glutamate 469, and asparagine 471 each coordinate Mg(2+). Residue glutamate 469 coordinates ATP.

It depends on Mg(2+) as a cofactor. In terms of tissue distribution, expressed in brain, heart, kidney, testis, liver, lung, muscle, spleen, trachea and colon.

It is found in the cytoplasm. The protein localises to the cytoskeleton. The protein resides in the cell projection. It localises to the cilium. Its subcellular location is the cilium axoneme. It is found in the flagellum axoneme. It catalyses the reaction L-glutamyl-[protein] + glycine + ATP = glycyl-L-glutamyl-[protein] + ADP + phosphate + H(+). Monoglycylase which modifies alpha- and beta-tubulin, adding a single glycine on the gamma-carboxyl groups of specific glutamate residues to generate monoglycine side chains within the C-terminal tail of tubulin. Not involved in elongation step of the polyglycylation reaction. Preferentially glycylates a beta-tail peptide over the alpha-tail, although shifts its preference toward alpha-tail as beta-tail glutamylation increases. Competes with polyglutamylases for modification site on beta-tubulin substrate, thereby creating an anticorrelation between glycylation and glutamylation reactions. Together with TTLL8, mediates microtubule glycylation of primary and motile cilia, which is essential for their stability and maintenance. Involved in microtubule glycylation of primary cilia in colon which controls cell proliferation of epithelial cells and plays an essential role in colon cancer development. Together with TTLL8, glycylates sperm flagella which regulates axonemal dynein motor activity, thereby controlling flagellar beat, directional sperm swimming and male fertility. The protein is Tubulin monoglycylase TTLL3 of Homo sapiens (Human).